We begin with the raw amino-acid sequence, 146 residues long: Transcriptional regulator MraZ (146 aa).

SpoVT-AbrB domains lie at 5–52 (SAAL…PRAE) and 81–124 (AAEI…KEES).

This sequence belongs to the MraZ family. As to quaternary structure, forms oligomers.

It localises to the cytoplasm. It is found in the nucleoid. The protein is Transcriptional regulator MraZ of Alcanivorax borkumensis (strain ATCC 700651 / DSM 11573 / NCIMB 13689 / SK2).